A 222-amino-acid chain; its full sequence is MAMYTAVSTSVVTQQQLSEPSAEAPRARPCRVTTADRSVRKGIMVHSLEDLHVKVRDTLMLAYKPFFLVLEEDGTTVETEEYFQSLADDTVFMVLHKGQKWQPPSEQSTRYQLALSHKPAKIDVARVTFDLYKVNPQDFIGCLNVKATLYGTYSVSYDLHCSGAKRIMKEALRWALFSMRTTGHMLLGTSCYLQQLLDATEREQPPKSKAASLIPTSLKMLQ.

A compositionally biased stretch (polar residues) spans 1–19 (MAMYTAVSTSVVTQQQLSE). Disordered regions lie at residues 1 to 33 (MAMY…CRVT) and 203 to 222 (EQPP…KMLQ). Residues 1–33 (MAMYTAVSTSVVTQQQLSEPSAEAPRARPCRVT) form a required for liquid-liquid phase separation (LLPS) region. One can recognise a CIDE-N domain in the interval 26–103 (RARPCRVTTA…VLHKGQKWQP (78 aa)).

It belongs to the CIDE family. As to quaternary structure, homodimer. Homooligomer; undergoes liquid-liquid phase separation (LLPS) via its N-terminus, facilitating lipid droplet fusion, occurs at the lipid droplet contact sites. Interacts with CIDEA. Interacts with PLIN1. Interacts with NFAT5; this interaction is direct and retains NFAT5 in the cytoplasm. Interacts with CEBPB. Interacts with isoform CLSTN3beta of CLSTN3; inhibiting the lipid transferase activity of CIDEC. In terms of processing, ubiquitinated and targeted to proteasomal degradation, resulting in a short half-life (about 15 minutes in 3T3-L1 cells). Protein stability depends on triaclyglycerol synthesis, fatty acid availability and lipid droplet formation.

The protein localises to the lipid droplet. The protein resides in the endoplasmic reticulum. It localises to the nucleus. It carries out the reaction a triacyl-sn-glycerol(in) = a triacyl-sn-glycerol(out). Lipid transferase specifically expressed in white adipose tissue, which promotes unilocular lipid droplet formation by mediating lipid droplet fusion. Lipid droplet fusion promotes their enlargement, restricting lipolysis and favoring lipid storage. Localizes on the lipid droplet surface, at focal contact sites between lipid droplets, and mediates atypical lipid droplet fusion by undergoing liquid-liquid phase separation (LLPS) and promoting directional net neutral lipid transfer from the smaller to larger lipid droplets. The transfer direction may be driven by the internal pressure difference between the contacting lipid droplet pair. Its role in neutral lipid transfer and lipid droplet enlargement is activated by the interaction with PLIN1. May also act as a CEBPB coactivator in the white adipose tissue to control the expression of a subset of CEBPB downstream target genes, including SOCS1, SOCS3, TGFB1, TGFBR1, ID2 and XDH. When overexpressed in preadipocytes, induces apoptosis or increases cell susceptibility to apoptosis induced by serum deprivation or TGFB treatment. In Bos taurus (Bovine), this protein is Lipid transferase CIDEC.